The chain runs to 458 residues: UDP-N-acetylmuramoylalanine--D-glutamate ligase (458 aa).

ATP is bound at residue 124–130 (GSDGKTT).

It belongs to the MurCDEF family.

The protein localises to the cytoplasm. The enzyme catalyses UDP-N-acetyl-alpha-D-muramoyl-L-alanine + D-glutamate + ATP = UDP-N-acetyl-alpha-D-muramoyl-L-alanyl-D-glutamate + ADP + phosphate + H(+). The protein operates within cell wall biogenesis; peptidoglycan biosynthesis. In terms of biological role, cell wall formation. Catalyzes the addition of glutamate to the nucleotide precursor UDP-N-acetylmuramoyl-L-alanine (UMA). In Clostridium botulinum (strain 657 / Type Ba4), this protein is UDP-N-acetylmuramoylalanine--D-glutamate ligase.